Here is a 304-residue protein sequence, read N- to C-terminus: Putative S-adenosyl-L-methionine-dependent methyltransferase MSMEG_1481/MSMEI_1445 (304 aa).

Residues D127 and 156 to 157 (DL) contribute to the S-adenosyl-L-methionine site.

The protein belongs to the UPF0677 family.

Functionally, exhibits S-adenosyl-L-methionine-dependent methyltransferase activity. The chain is Putative S-adenosyl-L-methionine-dependent methyltransferase MSMEG_1481/MSMEI_1445 from Mycolicibacterium smegmatis (strain ATCC 700084 / mc(2)155) (Mycobacterium smegmatis).